Reading from the N-terminus, the 196-residue chain is Glycerol-3-phosphate acyltransferase (196 aa).

Helical transmembrane passes span 1 to 21 (MIIF…SISG), 55 to 75 (IAIF…WLGT), 81 to 101 (PIYL…PIYF), 118 to 138 (AISI…VYLF), and 140 to 160 (YASL…WYIQ).

Belongs to the PlsY family. In terms of assembly, probably interacts with PlsX.

It localises to the cell inner membrane. It carries out the reaction an acyl phosphate + sn-glycerol 3-phosphate = a 1-acyl-sn-glycero-3-phosphate + phosphate. It participates in lipid metabolism; phospholipid metabolism. In terms of biological role, catalyzes the transfer of an acyl group from acyl-phosphate (acyl-PO(4)) to glycerol-3-phosphate (G3P) to form lysophosphatidic acid (LPA). This enzyme utilizes acyl-phosphate as fatty acyl donor, but not acyl-CoA or acyl-ACP. This is Glycerol-3-phosphate acyltransferase from Blochmanniella floridana.